A 247-amino-acid polypeptide reads, in one-letter code: 2,3-bisphosphoglycerate-dependent phosphoglycerate mutase (247 aa).

Substrate-binding positions include 8-15 (RHGESVWN), 21-22 (TG), Arg-60, 87-90 (ERHY), Lys-98, 114-115 (RR), and 183-184 (GN). His-9 serves as the catalytic Tele-phosphohistidine intermediate. Glu-87 acts as the Proton donor/acceptor in catalysis.

It belongs to the phosphoglycerate mutase family. BPG-dependent PGAM subfamily. As to quaternary structure, homodimer.

The enzyme catalyses (2R)-2-phosphoglycerate = (2R)-3-phosphoglycerate. Its pathway is carbohydrate degradation; glycolysis; pyruvate from D-glyceraldehyde 3-phosphate: step 3/5. Catalyzes the interconversion of 2-phosphoglycerate and 3-phosphoglycerate. The chain is 2,3-bisphosphoglycerate-dependent phosphoglycerate mutase from Geobacter metallireducens (strain ATCC 53774 / DSM 7210 / GS-15).